The primary structure comprises 427 residues: Glutamate-1-semialdehyde 2,1-aminomutase (427 aa).

Lys-265 bears the N6-(pyridoxal phosphate)lysine mark.

This sequence belongs to the class-III pyridoxal-phosphate-dependent aminotransferase family. HemL subfamily. In terms of assembly, homodimer. Pyridoxal 5'-phosphate is required as a cofactor.

The protein localises to the cytoplasm. It catalyses the reaction (S)-4-amino-5-oxopentanoate = 5-aminolevulinate. Its pathway is porphyrin-containing compound metabolism; protoporphyrin-IX biosynthesis; 5-aminolevulinate from L-glutamyl-tRNA(Glu): step 2/2. The chain is Glutamate-1-semialdehyde 2,1-aminomutase from Burkholderia cenocepacia (strain HI2424).